A 1225-amino-acid chain; its full sequence is ABC transporter B family member 18 (1225 aa).

6 helical membrane passes run 23-43, 70-90, 146-168, 172-194, 252-272, and 284-304; these read MALG…IFFI, VALV…GYCW, LPNF…LLLW, IVGF…ALIR, GIAI…TWYG, and GTVS…GQSL. One can recognise an ABC transmembrane type-1 1 domain in the interval 23 to 312; that stretch reads MALGLIGAVG…SLSNLKYFSE (290 aa). Positions 347 to 583 constitute an ABC transporter 1 domain; it reads VEFNHVKFTY…LDGQYTSLVR (237 aa). Position 382–389 (382–389) interacts with ATP; it reads GGSGSGKS. Asn530 carries an N-linked (GlcNAc...) asparagine glycan. 2 consecutive transmembrane segments (helical) span residues 657-677 and 699-719; these read ALYG…YSYS and IYVL…ISQH. The region spanning 657–945 is the ABC transmembrane type-1 2 domain; the sequence is ALYGCLGAAL…AGTMTKDLVK (289 aa). A glycan (N-linked (GlcNAc...) asparagine) is linked at Asn754. A run of 4 helical transmembrane segments spans residues 780 to 800, 804 to 824, 880 to 900, and 919 to 939; these read LLVQ…VISW, IVMM…RVLL, SWLA…VSAL, and FLEI…AGTM. N-linked (GlcNAc...) asparagine glycosylation is found at Asn960 and Asn1000. The region spanning 980 to 1218 is the ABC transporter 2 domain; that stretch reads ISFSNVDFAY…GPKGAYFSLV (239 aa). 1015–1022 serves as a coordination point for ATP; it reads GPSGSGKS. N-linked (GlcNAc...) asparagine glycosylation occurs at Asn1201.

This sequence belongs to the ABC transporter superfamily. ABCB family. Multidrug resistance exporter (TC 3.A.1.201) subfamily.

Its subcellular location is the membrane. The sequence is that of ABC transporter B family member 18 (ABCB18) from Arabidopsis thaliana (Mouse-ear cress).